Here is a 101-residue protein sequence, read N- to C-terminus: Urease subunit beta (101 aa).

It belongs to the urease beta subunit family. In terms of assembly, heterotrimer of UreA (gamma), UreB (beta) and UreC (alpha) subunits. Three heterotrimers associate to form the active enzyme.

The protein localises to the cytoplasm. The catalysed reaction is urea + 2 H2O + H(+) = hydrogencarbonate + 2 NH4(+). Its pathway is nitrogen metabolism; urea degradation; CO(2) and NH(3) from urea (urease route): step 1/1. The sequence is that of Urease subunit beta from Azotobacter vinelandii (strain DJ / ATCC BAA-1303).